Here is a 238-residue protein sequence, read N- to C-terminus: Aspartate/glutamate leucyltransferase (238 aa).

It belongs to the R-transferase family. Bpt subfamily.

It localises to the cytoplasm. The catalysed reaction is N-terminal L-glutamyl-[protein] + L-leucyl-tRNA(Leu) = N-terminal L-leucyl-L-glutamyl-[protein] + tRNA(Leu) + H(+). It catalyses the reaction N-terminal L-aspartyl-[protein] + L-leucyl-tRNA(Leu) = N-terminal L-leucyl-L-aspartyl-[protein] + tRNA(Leu) + H(+). Its function is as follows. Functions in the N-end rule pathway of protein degradation where it conjugates Leu from its aminoacyl-tRNA to the N-termini of proteins containing an N-terminal aspartate or glutamate. In Shewanella sp. (strain ANA-3), this protein is Aspartate/glutamate leucyltransferase.